A 247-amino-acid chain; its full sequence is MSITIRELCNDTYHFVSKEIKIIIFISVLAAFISILINVLIKPNIHIISIIENKKFLSSHSIFDLINSMSIYEKKELLKYSIFKIFEFLISKTFLLGSIITLITHLSNHKKESIQFSLNSLCKFLPSLFILNFITTFFIQIGFMFFIFPGIFLSVLLALSPIILSFKKNNLIDCIRLSISISCKHLNIVGTSVLFWMCVKFILTTVFSNTYIISKNFIFLILNINMNIFFSILIVYLFRFYMLFLRS.

The next 6 helical transmembrane spans lie at 20 to 40 (IKIIIFISVLAAFISILINVL), 82 to 102 (IFKIFEFLISKTFLLGSIITL), 114 to 134 (IQFSLNSLCKFLPSLFILNFI), 137 to 157 (FFIQIGFMFFIFPGIFLSVLL), 188 to 208 (IVGTSVLFWMCVKFILTTVFS), and 217 to 237 (FIFLILNINMNIFFSILIVYL).

This sequence belongs to the UPF0259 family.

The protein localises to the cell membrane. This Buchnera aphidicola subsp. Schizaphis graminum (strain Sg) protein is UPF0259 membrane protein BUsg_265.